The following is a 297-amino-acid chain: Transcription factor bHLH129 (297 aa).

The segment at 1 to 145 is disordered; it reads MYPPNSSKST…SSSHQEHNSL (145 aa). Ser35 carries the post-translational modification Phosphoserine. A compositionally biased stretch (low complexity) spans 68–82; it reads SSIGFDSNASSSSSL. A compositionally biased stretch (gly residues) spans 111–121; it reads PNGGYGGGGEQ. Position 138 is a phosphoserine (Ser138). The 51-residue stretch at 239 to 289 folds into the bHLH domain; sequence FATHPRSIAERERRTRISGKLKKLQELVPNMDKQTSYADMLDLAVEHIKGL.

Homodimer.

It localises to the nucleus. In Arabidopsis thaliana (Mouse-ear cress), this protein is Transcription factor bHLH129 (BHLH129).